A 492-amino-acid polypeptide reads, in one-letter code: V-type proton ATPase subunit B 2 (492 aa).

It belongs to the ATPase alpha/beta chains family. V-ATPase is a heteromultimeric enzyme composed of a peripheral catalytic V1 complex (main components: subunits A, B, C, D, E, and F) attached to an integral membrane V0 proton pore complex (main component: the proteolipid protein).

In terms of biological role, non-catalytic subunit of the peripheral V1 complex of vacuolar ATPase. V-ATPase is responsible for acidifying a variety of intracellular compartments in eukaryotic cells. The protein is V-type proton ATPase subunit B 2 of Acetabularia acetabulum (Mermaid's wine glass).